The primary structure comprises 74 residues: Mitotic-spindle organizing protein 1 (74 aa).

The protein belongs to the MOZART1 family. In terms of assembly, part of the gamma-tubulin complex.

It is found in the cytoplasm. It localises to the cytoskeleton. The protein resides in the microtubule organizing center. Its subcellular location is the spindle pole body. In terms of biological role, required for gamma-tubulin complex recruitment to the microtubule organizing center (MTOC). This is Mitotic-spindle organizing protein 1 from Emericella nidulans (strain FGSC A4 / ATCC 38163 / CBS 112.46 / NRRL 194 / M139) (Aspergillus nidulans).